An 802-amino-acid chain; its full sequence is Mitochondrial inner membrane m-AAA protease component AFG3L2 (802 aa).

The N-terminal 38 residues, 1 to 38 (MAHRCLLLWSRGGCRRGLPPLLVPRGCLGPDRRPCLRT), are a transit peptide targeting the mitochondrion. Residues 39–66 (LYQYATVQTASSRRSLLRDVIAAYQRFC) constitute a propeptide, removed in mature form. The tract at residues 76–124 (YFPNGKNGKKASEPKEAVGEKKEPQPSGPQPSGGAGGGGGKRRGKKEDS) is disordered. The span at 85 to 99 (KASEPKEAVGEKKEP) shows a compositional bias: basic and acidic residues. Lys-116 carries the post-translational modification N6-succinyllysine. The next 2 helical transmembrane spans lie at 142-162 (FRMYFLWTALFWGGVMIYFVF) and 250-270 (GSFLLSMLPTVLIIAFLLYTI). ATP-binding residues include Val-309, Ala-310, Thr-351, Gly-352, Lys-353, Thr-354, Leu-355, and His-489. His-573 contacts Zn(2+). Glu-574 is a catalytic residue. The Zn(2+) site is built by His-577 and Asp-648. Positions 759 to 802 (VEGTGSLDEDTSLPEGLQDWNKEREKEEKKEKEKEEPLNEKVVS) are disordered. The span at 778–802 (WNKEREKEEKKEKEKEEPLNEKVVS) shows a compositional bias: basic and acidic residues.

The protein in the N-terminal section; belongs to the AAA ATPase family. This sequence in the C-terminal section; belongs to the peptidase M41 family. Homohexamer. Forms heterohexamers with SPG7 and AFG3L1. The m-AAA protease is either composed of homohexamers of AFG3L2 or heterohexamers of AFG3L1, AFG3L2 and/or SPG7. Interacts with MAIP1. Interacts with DNAJC19. Interacts with PHB2. Requires Zn(2+) as cofactor. Upon import into the mitochondrion, the N-terminal transit peptide is cleaved to generate an intermediate form which undergoes autocatalytic proteolytic processing to generate the proteolytically active mature form. Highly expressed in the cerebellar Purkinje cells.

It is found in the mitochondrion inner membrane. It catalyses the reaction ATP + H2O = ADP + phosphate + H(+). Its function is as follows. Catalytic component of the m-AAA protease, a protease that plays a key role in proteostasis of inner mitochondrial membrane proteins, and which is essential for axonal and neuron development. AFG3L2 possesses both ATPase and protease activities: the ATPase activity is required to unfold substrates, threading them into the internal proteolytic cavity for hydrolysis into small peptide fragments. The m-AAA protease carries out protein quality control in the inner membrane of the mitochondria by mediating degradation of mistranslated or misfolded polypeptides. The m-AAA protease complex also promotes the processing and maturation of mitochondrial proteins, such as MRPL32/bL32m, PINK1 and SP7. Mediates protein maturation of the mitochondrial ribosomal subunit MRPL32/bL32m by catalyzing the cleavage of the presequence of MRPL32/bL32m prior to assembly into the mitochondrial ribosome. Required for SPG7 maturation into its active mature form after SPG7 cleavage by mitochondrial-processing peptidase (MPP). Required for the maturation of PINK1 into its 52kDa mature form after its cleavage by mitochondrial-processing peptidase (MPP). Acts as a regulator of calcium in neurons by mediating degradation of SMDT1/EMRE before its assembly with the uniporter complex, limiting the availability of SMDT1/EMRE for MCU assembly and promoting efficient assembly of gatekeeper subunits with MCU. Promotes the proteolytic degradation of GHITM upon hyperpolarization of mitochondria: progressive GHITM degradation leads to respiratory complex I degradation and broad reshaping of the mitochondrial proteome by AFG3L2. Also acts as a regulator of mitochondrial glutathione homeostasis by mediating cleavage and degradation of SLC25A39. SLC25A39 cleavage is prevented when SLC25A39 binds iron-sulfur. Involved in the regulation of OMA1-dependent processing of OPA1. May act by mediating processing of OMA1 precursor, participating in OMA1 maturation. The chain is Mitochondrial inner membrane m-AAA protease component AFG3L2 from Mus musculus (Mouse).